Here is a 901-residue protein sequence, read N- to C-terminus: Dipeptidyl-aminopeptidase B (901 aa).

Residues Met1–Thr22 are compositionally biased toward low complexity. Residues Met1 to Gln67 are disordered. Over Met1–Arg76 the chain is Cytoplasmic. The helical; Signal-anchor for type II membrane protein transmembrane segment at Leu77–Val97 threads the bilayer. At Thr98–Asn901 the chain is on the vacuolar side. Residues Asn334 and Asn625 are each glycosylated (N-linked (GlcNAc...) asparagine). Residue Ser739 is the Charge relay system of the active site. Residue Asn793 is glycosylated (N-linked (GlcNAc...) asparagine). Active-site charge relay system residues include Asp816 and His849.

Belongs to the peptidase S9B family.

It localises to the vacuole membrane. It carries out the reaction Release of an N-terminal dipeptide, Xaa-Yaa-|-Zaa-, from a polypeptide, preferentially when Yaa is Pro, provided Zaa is neither Pro nor hydroxyproline.. Type IV dipeptidyl-peptidase which removes N-terminal dipeptides sequentially from polypeptides having unsubstituted N-termini provided that the penultimate residue is proline. In Aspergillus niger, this protein is Dipeptidyl-aminopeptidase B (dapB).